Reading from the N-terminus, the 469-residue chain is Glutamate--tRNA ligase 2 (469 aa).

The 'HIGH' region motif lies at 10–20; that stretch reads PSPTGYLHIGG. 4 residues coordinate Zn(2+): C99, C101, C126, and D128. Positions 237-241 match the 'KMSKS' region motif; that stretch reads RLSKR. K240 is an ATP binding site.

Belongs to the class-I aminoacyl-tRNA synthetase family. Glutamate--tRNA ligase type 1 subfamily. In terms of assembly, monomer. The cofactor is Zn(2+).

Its subcellular location is the cytoplasm. It catalyses the reaction tRNA(Glu) + L-glutamate + ATP = L-glutamyl-tRNA(Glu) + AMP + diphosphate. In terms of biological role, catalyzes the attachment of glutamate to tRNA(Glu) in a two-step reaction: glutamate is first activated by ATP to form Glu-AMP and then transferred to the acceptor end of tRNA(Glu). The polypeptide is Glutamate--tRNA ligase 2 (Coxiella burnetii (strain CbuG_Q212) (Coxiella burnetii (strain Q212))).